Here is a 239-residue protein sequence, read N- to C-terminus: Aspartate/glutamate leucyltransferase (239 aa).

The protein belongs to the R-transferase family. Bpt subfamily.

The protein resides in the cytoplasm. The catalysed reaction is N-terminal L-glutamyl-[protein] + L-leucyl-tRNA(Leu) = N-terminal L-leucyl-L-glutamyl-[protein] + tRNA(Leu) + H(+). It carries out the reaction N-terminal L-aspartyl-[protein] + L-leucyl-tRNA(Leu) = N-terminal L-leucyl-L-aspartyl-[protein] + tRNA(Leu) + H(+). Its function is as follows. Functions in the N-end rule pathway of protein degradation where it conjugates Leu from its aminoacyl-tRNA to the N-termini of proteins containing an N-terminal aspartate or glutamate. In Campylobacter jejuni subsp. jejuni serotype O:23/36 (strain 81-176), this protein is Aspartate/glutamate leucyltransferase.